Reading from the N-terminus, the 478-residue chain is Adenosylhomocysteinase (478 aa).

Substrate-binding residues include Thr-56, Asp-139, and Glu-201. Residue 202-204 coordinates NAD(+); sequence TTT. Residues Lys-231 and Asp-235 each coordinate substrate. Residues Asn-236, 265 to 270, Glu-288, Asn-323, 344 to 346, and Asn-392 each bind NAD(+); these read GYGDVG and IGH.

It belongs to the adenosylhomocysteinase family. NAD(+) serves as cofactor.

Its subcellular location is the cytoplasm. The catalysed reaction is S-adenosyl-L-homocysteine + H2O = L-homocysteine + adenosine. The protein operates within amino-acid biosynthesis; L-homocysteine biosynthesis; L-homocysteine from S-adenosyl-L-homocysteine: step 1/1. In terms of biological role, may play a key role in the regulation of the intracellular concentration of adenosylhomocysteine. This is Adenosylhomocysteinase from Corynebacterium diphtheriae (strain ATCC 700971 / NCTC 13129 / Biotype gravis).